The primary structure comprises 405 residues: S-adenosylmethionine synthase (405 aa).

141–146 serves as a coordination point for ATP; that stretch reads GQGSVD.

Belongs to the AdoMet synthase 2 family. Requires Mg(2+) as cofactor.

It catalyses the reaction L-methionine + ATP + H2O = S-adenosyl-L-methionine + phosphate + diphosphate. The protein operates within amino-acid biosynthesis; S-adenosyl-L-methionine biosynthesis; S-adenosyl-L-methionine from L-methionine: step 1/1. Functionally, catalyzes the formation of S-adenosylmethionine from methionine and ATP. This chain is S-adenosylmethionine synthase, found in Methanococcus maripaludis (strain C6 / ATCC BAA-1332).